The primary structure comprises 628 residues: Dual specificity testis-specific protein kinase 1 (628 aa).

The tract at residues 1–35 (MAGERPPLRGPGPGETPVEGPGGAGGGPGRGRPSS) is disordered. A compositionally biased stretch (gly residues) spans 20 to 30 (GPGGAGGGPGR). One can recognise a Protein kinase domain in the interval 52-310 (FDCAEKIGAG…EITQHLEQIL (259 aa)). Residues 58–66 (IGAGFFSEV) and K81 each bind ATP. D170 (proton acceptor) is an active-site residue. S215 is subject to Phosphoserine; by autocatalysis. 3 disordered regions span residues 330 to 376 (TYNQ…DNLT), 424 to 490 (PESL…QLPL), and 538 to 568 (RAQH…EEGL). R338 is subject to Omega-N-methylarginine. A compositionally biased stretch (basic and acidic residues) spans 348 to 357 (SDPRLSRSRS). Positions 421-526 (VASPESLVQP…NNNPPAVVVN (106 aa)) are required for interaction with YWHAB. Position 439 is a phosphoserine (S439). The segment covering 478 to 487 (EPEPPGPAPQ) has biased composition (pro residues). The required for interaction with PARVA stretch occupies residues 529 to 626 (QGWAREPWNR…PTPSLQLPGA (98 aa)). Residues 529–628 (QGWAREPWNR…PSLQLPGARS (100 aa)) are required for interaction with SPRED1 and SPRY2. Required for TESK1-mediated dephosphorylation of SPRY2 and SPRY2 inhibition of ERK phosphorylation.

This sequence belongs to the protein kinase superfamily. TKL Ser/Thr protein kinase family. In terms of assembly, interacts (via both C- and N-termini) with SPRY4 (via C-terminus); the interaction inhibits TESK1 kinase activity. Interacts with TAOK1; the interaction inhibits TAOK1 kinase activity. Interacts (via C-terminus) with SPRED1 (via C-terminus); the interaction inhibits TESK1 kinase activity. Interacts (via C-terminus) with PARVA/PARVIN (via C-terminus); the interaction inhibits TESK1 kinase activity. Interacts with YWHAB/14-3-3 beta; the interaction is dependent on the phosphorylation of TESK1 Ser-439 and inhibits TESK1 kinase activity. Interacts with SPRY1, SPRY3 and SPRED2. Interacts (via C-terminus) with SPRY2 (via C-terminus); the interaction disrupts SPRY2 interaction with PPP2CA/PP2A-C, possibly by vesicular sequestration of SPRY2. Therefore dephosphorylation of SPRY2 by the serine/threonine-protein phosphatase 2A (PP2A) holoenzyme is lost, inhibiting its interaction with GRB2. Mg(2+) is required as a cofactor. Mn(2+) serves as cofactor. Post-translationally, autophosphorylated on serine and tyrosine residues. In terms of tissue distribution, weakly expressed in sciatic nerves (at protein level). Highly expressed in testicular germ cells. Expressed at low levels in brain, lung, heart, liver and kidney.

The protein resides in the cytoplasm. It is found in the perinuclear region. Its subcellular location is the cytoskeleton. It localises to the microtubule organizing center. The protein localises to the centrosome. The protein resides in the cell projection. It is found in the lamellipodium. The enzyme catalyses L-seryl-[protein] + ATP = O-phospho-L-seryl-[protein] + ADP + H(+). The catalysed reaction is L-threonyl-[protein] + ATP = O-phospho-L-threonyl-[protein] + ADP + H(+). It carries out the reaction L-tyrosyl-[protein] + ATP = O-phospho-L-tyrosyl-[protein] + ADP + H(+). Activated by autophosphorylation on Ser-215. Kinase activity is inhibited by SPRED1. Its function is as follows. Dual specificity protein kinase activity catalyzing autophosphorylation and phosphorylation of exogenous substrates on both serine/threonine and tyrosine residues. Regulates the cellular cytoskeleton by enhancing actin stress fiber formation via phosphorylation of cofilin and by preventing microtubule breakdown via inhibition of TAOK1/MARKK kinase activity. Inhibits podocyte motility via regulation of actin cytoskeletal dynamics and phosphorylation of CFL1. Positively regulates integrin-mediated cell spreading, via phosphorylation of cofilin. Suppresses ciliogenesis via multiple pathways; phosphorylation of CFL1, suppression of ciliary vesicle directional trafficking to the ciliary base, and by facilitating YAP1 nuclear localization where it acts as a transcriptional corepressor of the TEAD4 target genes AURKA and PLK1. Probably plays a central role at and after the meiotic phase of spermatogenesis. The chain is Dual specificity testis-specific protein kinase 1 (Tesk1) from Rattus norvegicus (Rat).